A 768-amino-acid chain; its full sequence is Telomere repeats-binding bouquet formation protein 1 (768 aa).

2 ARM repeats span residues 101-145 (ELFQ…REVG) and 341-384 (NGLP…GQNS). Residues 399-448 (ETLREHWKAAKEILCRIKQFEKGGKEEKQQNRSGHYKDNTPSMKVNIQTN) adopt a coiled-coil conformation. Composition is skewed to basic and acidic residues over residues 422-436 (GKEEKQQNRSGHYKD) and 461-475 (RAEDKDINQSRELRS). 2 disordered regions span residues 422-441 (GKEEKQQNRSGHYKDNTPSM) and 454-475 (ADSTGGTRAEDKDINQSRELRS). Residues 524–700 (QNLDKEKTFD…EAMERRSPVP (177 aa)) form an interaction with TERF1 region. Threonine 648 is subject to Phosphothreonine. Positions 707 to 760 (KKRRIRKDFTKEEVNYLFHGVKTMGNHWNSILWSFPFQKGRRAVDLAHKYHRLI) constitute a Myb-like domain.

Belongs to the TERB1 family. As to quaternary structure, component of the MAJIN-TERB1-TERB2 complex, composed of MAJIN, TERB1 and TERB2. Interacts with TERF1, STAG3 and SUN1. Interacts (via Myb-like domain) with the cohesin complex; probably mediated via interaction with STAG3. In terms of processing, phosphorylated by CDK. Phosphorylation by CDK takes place in late prophase when the cap exchange is prominent. is important for the stabilization of telomere attachment but dispenable for the cap exchange. As to expression, expressed in testis and fetal oocytes.

Its subcellular location is the chromosome. It is found in the telomere. The protein localises to the nucleus inner membrane. Meiosis-specific telomere-associated protein involved in meiotic telomere attachment to the nucleus inner membrane, a crucial step for homologous pairing and synapsis. Component of the MAJIN-TERB1-TERB2 complex, which promotes telomere cap exchange by mediating attachment of telomeric DNA to the inner nuclear membrane and replacement of the protective cap of telomeric chromosomes: in early meiosis, the MAJIN-TERB1-TERB2 complex associates with telomeric DNA and the shelterin/telosome complex. During prophase, the complex matures and promotes release of the shelterin/telosome complex from telomeric DNA. In the MAJIN-TERB1-TERB2 complex, TERB1 probably mediates association with the shelterin/telosome complex via interaction with TERF1, promoting priming telomeric DNA attachment'. Promotes telomere association with the nuclear envelope and deposition of the SUN-KASH/LINC complex. Also recruits cohesin to telomeres to develop structural rigidity. The protein is Telomere repeats-binding bouquet formation protein 1 of Mus musculus (Mouse).